Consider the following 277-residue polypeptide: C2H2-type zinc-finger transcription factor (277 aa).

Disordered regions lie at residues 23-66 and 78-146; these read PTMN…AHPP and MNEP…TDSI. Residues 27 to 37 are compositionally biased toward polar residues; the sequence is EIETTDNTYPR. The C2H2-type; degenerate zinc-finger motif lies at 185 to 208; that stretch reads HPCPDCGRVFTRSTARNFHRQSGT.

It belongs to the GLI C2H2-type zinc-finger protein family.

It localises to the nucleus. C2H2-type zinc-finger transcription factor that controls the expression of the nonribosomal peptide synthases inpA and inpB, as well as of the other inp cluster-associated genes. Also mediates the expression of the asperfuranone biosynthesis gene cluster by binding to the afoA promoter. Probably recognizes the 5'-CT/C/AAAAGGAT/AT/GG/CA-3' motif in the promoters of teget genes. In Emericella nidulans (strain FGSC A4 / ATCC 38163 / CBS 112.46 / NRRL 194 / M139) (Aspergillus nidulans), this protein is C2H2-type zinc-finger transcription factor.